Reading from the N-terminus, the 305-residue chain is Aspartate carbamoyltransferase catalytic subunit (305 aa).

The carbamoyl phosphate site is built by Arg54 and Thr55. L-aspartate is bound at residue Lys83. Residues Arg104, His132, and Gln135 each coordinate carbamoyl phosphate. Positions 165 and 226 each coordinate L-aspartate. Carbamoyl phosphate is bound by residues Leu265 and Pro266.

This sequence belongs to the aspartate/ornithine carbamoyltransferase superfamily. ATCase family. In terms of assembly, heterooligomer of catalytic and regulatory chains.

It catalyses the reaction carbamoyl phosphate + L-aspartate = N-carbamoyl-L-aspartate + phosphate + H(+). Its pathway is pyrimidine metabolism; UMP biosynthesis via de novo pathway; (S)-dihydroorotate from bicarbonate: step 2/3. In terms of biological role, catalyzes the condensation of carbamoyl phosphate and aspartate to form carbamoyl aspartate and inorganic phosphate, the committed step in the de novo pyrimidine nucleotide biosynthesis pathway. This Pyrobaculum calidifontis (strain DSM 21063 / JCM 11548 / VA1) protein is Aspartate carbamoyltransferase catalytic subunit.